A 345-amino-acid polypeptide reads, in one-letter code: Transcription factor 19 (345 aa).

An FHA domain is found at 31–88; that stretch reads YRLGHRADLCDVALRPQQEPGLISGIHAELHAEPRGDDWRVSLEDHSSQGTLVNNVRL. The residue at position 78 (Ser78) is a Phosphoserine. Disordered stretches follow at residues 147–167 and 190–227; these read AGFRPMLPSQGAPQRPLSTLS and LTFSPSWGGPKSLPVPAPPGEVGTTPSAPPQRNRRKSV. The PHD-type zinc-finger motif lies at 293–342; that stretch reads AAPCCCLPQEETVAWVQCDGCDVWFHVACVGCSIQAAREADFRCPGCRAG. Positions 296, 298, 310, 313, 318, 321, 336, and 339 each coordinate Zn(2+).

The protein localises to the nucleus. Potential transcription factor that may play a role in the regulation of genes involved in cell cycle G1/S transition. May bind to regulatory elements of genes, including the promoter of the transcription factor FOXO1. This is Transcription factor 19 (TCF19) from Pan troglodytes (Chimpanzee).